Reading from the N-terminus, the 372-residue chain is Chorismate synthase (372 aa).

NADP(+) contacts are provided by Arg-48 and Arg-54. FMN contacts are provided by residues 125 to 127 (RSS), 238 to 239 (NA), Gly-278, 293 to 297 (KPTSS), and Arg-319.

Belongs to the chorismate synthase family. In terms of assembly, homotetramer. FMNH2 is required as a cofactor.

The catalysed reaction is 5-O-(1-carboxyvinyl)-3-phosphoshikimate = chorismate + phosphate. It participates in metabolic intermediate biosynthesis; chorismate biosynthesis; chorismate from D-erythrose 4-phosphate and phosphoenolpyruvate: step 7/7. Catalyzes the anti-1,4-elimination of the C-3 phosphate and the C-6 proR hydrogen from 5-enolpyruvylshikimate-3-phosphate (EPSP) to yield chorismate, which is the branch point compound that serves as the starting substrate for the three terminal pathways of aromatic amino acid biosynthesis. This reaction introduces a second double bond into the aromatic ring system. The chain is Chorismate synthase from Xylella fastidiosa (strain 9a5c).